The chain runs to 274 residues: Diaminopimelate epimerase (274 aa).

Substrate contacts are provided by Asn-11 and Asn-65. The active-site Proton donor is the Cys-74. Substrate contacts are provided by residues 75–76 (GN), Asn-158, Asn-191, and 209–210 (ER). Residue Cys-218 is the Proton acceptor of the active site. 219 to 220 (GT) contacts substrate.

It belongs to the diaminopimelate epimerase family. In terms of assembly, homodimer.

The protein resides in the cytoplasm. It carries out the reaction (2S,6S)-2,6-diaminopimelate = meso-2,6-diaminopimelate. It functions in the pathway amino-acid biosynthesis; L-lysine biosynthesis via DAP pathway; DL-2,6-diaminopimelate from LL-2,6-diaminopimelate: step 1/1. In terms of biological role, catalyzes the stereoinversion of LL-2,6-diaminopimelate (L,L-DAP) to meso-diaminopimelate (meso-DAP), a precursor of L-lysine and an essential component of the bacterial peptidoglycan. The chain is Diaminopimelate epimerase from Carboxydothermus hydrogenoformans (strain ATCC BAA-161 / DSM 6008 / Z-2901).